A 111-amino-acid polypeptide reads, in one-letter code: Large ribosomal subunit protein uL24 (111 aa).

It belongs to the universal ribosomal protein uL24 family. Part of the 50S ribosomal subunit.

Its function is as follows. One of two assembly initiator proteins, it binds directly to the 5'-end of the 23S rRNA, where it nucleates assembly of the 50S subunit. In terms of biological role, one of the proteins that surrounds the polypeptide exit tunnel on the outside of the subunit. This Chlamydia pneumoniae (Chlamydophila pneumoniae) protein is Large ribosomal subunit protein uL24.